The following is a 159-amino-acid chain: 2-C-methyl-D-erythritol 2,4-cyclodiphosphate synthase (159 aa).

Aspartate 8 and histidine 10 together coordinate a divalent metal cation. Residues 8 to 10 (DVH) and 34 to 35 (HS) contribute to the 4-CDP-2-C-methyl-D-erythritol 2-phosphate site. Histidine 42 serves as a coordination point for a divalent metal cation. Residues 56–58 (DIG), 61–65 (FPDTD), 132–135 (TTTE), phenylalanine 139, and arginine 142 each bind 4-CDP-2-C-methyl-D-erythritol 2-phosphate.

It belongs to the IspF family. In terms of assembly, homotrimer. It depends on a divalent metal cation as a cofactor.

The enzyme catalyses 4-CDP-2-C-methyl-D-erythritol 2-phosphate = 2-C-methyl-D-erythritol 2,4-cyclic diphosphate + CMP. The protein operates within isoprenoid biosynthesis; isopentenyl diphosphate biosynthesis via DXP pathway; isopentenyl diphosphate from 1-deoxy-D-xylulose 5-phosphate: step 4/6. In terms of biological role, involved in the biosynthesis of isopentenyl diphosphate (IPP) and dimethylallyl diphosphate (DMAPP), two major building blocks of isoprenoid compounds. Catalyzes the conversion of 4-diphosphocytidyl-2-C-methyl-D-erythritol 2-phosphate (CDP-ME2P) to 2-C-methyl-D-erythritol 2,4-cyclodiphosphate (ME-CPP) with a corresponding release of cytidine 5-monophosphate (CMP). The sequence is that of 2-C-methyl-D-erythritol 2,4-cyclodiphosphate synthase from Finegoldia magna (strain ATCC 29328 / DSM 20472 / WAL 2508) (Peptostreptococcus magnus).